Reading from the N-terminus, the 245-residue chain is MTSTASSSSRIVTDSPIVVALDYHNRENALAFVDKIDPRDCRLKVGKEMFTLFGPQFVRELQQRGFDIFLDLKFHDIPNTAAHAVAAAADLGVWMVNVHASGGARMMTAAREALLPFGKDAPLLIAVTVLTSMEASDLADLGVTVSPAQYAERLAGLTQKCGLDGVVCSAQEAVRFKQAFGEDFKLVTPGIRPQGSAAGDQRRIMTPEQALAAGVDYMVIGRPVTQSEDPAQTLKTINASLKGHG.

Substrate is bound by residues Asp22, Lys44, Asp71–Thr80, Thr131, Arg192, Gln201, Gly221, and Arg222. Lys73 acts as the Proton donor in catalysis.

This sequence belongs to the OMP decarboxylase family. Type 1 subfamily. Homodimer.

The enzyme catalyses orotidine 5'-phosphate + H(+) = UMP + CO2. Its pathway is pyrimidine metabolism; UMP biosynthesis via de novo pathway; UMP from orotate: step 2/2. Functionally, catalyzes the decarboxylation of orotidine 5'-monophosphate (OMP) to uridine 5'-monophosphate (UMP). In Escherichia fergusonii (strain ATCC 35469 / DSM 13698 / CCUG 18766 / IAM 14443 / JCM 21226 / LMG 7866 / NBRC 102419 / NCTC 12128 / CDC 0568-73), this protein is Orotidine 5'-phosphate decarboxylase.